The chain runs to 484 residues: Cysteine--tRNA ligase (484 aa).

Cys29 provides a ligand contact to Zn(2+). The short motif at 31–41 (PTVQSAPHIGH) is the 'HIGH' region element. Residues Cys219, His244, and Glu248 each coordinate Zn(2+). The short motif at 275-279 (KMSKS) is the 'KMSKS' region element. Lys278 contributes to the ATP binding site.

Belongs to the class-I aminoacyl-tRNA synthetase family. As to quaternary structure, monomer. It depends on Zn(2+) as a cofactor.

Its subcellular location is the cytoplasm. The catalysed reaction is tRNA(Cys) + L-cysteine + ATP = L-cysteinyl-tRNA(Cys) + AMP + diphosphate. The chain is Cysteine--tRNA ligase from Clavibacter sepedonicus (Clavibacter michiganensis subsp. sepedonicus).